The following is a 703-amino-acid chain: DNA ligase (703 aa).

Residues 54-58 (DAEYD), 103-104 (SL), and Glu132 contribute to the NAD(+) site. The active-site N6-AMP-lysine intermediate is Lys134. Arg155, Glu192, Lys308, and Lys332 together coordinate NAD(+). Zn(2+) contacts are provided by Cys426, Cys429, Cys444, and Cys450. In terms of domain architecture, BRCT spans 608 to 698 (EGPGPLDGVV…ADAARALAVP (91 aa)).

Belongs to the NAD-dependent DNA ligase family. LigA subfamily. It depends on Mg(2+) as a cofactor. Mn(2+) is required as a cofactor.

It carries out the reaction NAD(+) + (deoxyribonucleotide)n-3'-hydroxyl + 5'-phospho-(deoxyribonucleotide)m = (deoxyribonucleotide)n+m + AMP + beta-nicotinamide D-nucleotide.. Functionally, DNA ligase that catalyzes the formation of phosphodiester linkages between 5'-phosphoryl and 3'-hydroxyl groups in double-stranded DNA using NAD as a coenzyme and as the energy source for the reaction. It is essential for DNA replication and repair of damaged DNA. The polypeptide is DNA ligase (Parafrankia sp. (strain EAN1pec)).